A 297-amino-acid chain; its full sequence is MRIILITGISGSGKSVALNALEDAGYYCVDNLPPRFLPQLASYLAEDGQDRLAVAIDARSSASLDEMPAMIRDLSRAHDVRVLFLNASTQSLIQRFSETRRRHPLSGSTSHDADVGLLTSLAEAIERERELVAGLAEFGHQIDTSNLRANVLRAWVKRFIEQKDSGLVLMFESFGFKRGVPLDADFVFDVRTLPNPYYDHELRPLTGLDKPVIDFLDALPVVHEMIHDIEKFLVKWLPHFRDDNRSYLTVAIGCTGGQHRSVFIAETLAARLASSANVIVRHRDAPVEAGESSKLVA.

ATP is bound at residue 8–15 (GISGSGKS). A GTP-binding site is contributed by 57–60 (DARS).

Belongs to the RapZ-like family.

Displays ATPase and GTPase activities. The chain is Nucleotide-binding protein Bphyt_0592 from Paraburkholderia phytofirmans (strain DSM 17436 / LMG 22146 / PsJN) (Burkholderia phytofirmans).